The chain runs to 53 residues: Large ribosomal subunit protein bL32 (53 aa).

The segment at 1–27 is disordered; sequence MAVQQNKKSRSRRDMRRSHDALTTAAV. Residues 7 to 16 show a composition bias toward basic residues; sequence KKSRSRRDMR.

It belongs to the bacterial ribosomal protein bL32 family.

The sequence is that of Large ribosomal subunit protein bL32 from Glaesserella parasuis serovar 5 (strain SH0165) (Haemophilus parasuis).